A 426-amino-acid chain; its full sequence is uncharacterized protein (426 aa).

The protein belongs to the serpin family.

This is an uncharacterized protein from Methanosarcina mazei (strain ATCC BAA-159 / DSM 3647 / Goe1 / Go1 / JCM 11833 / OCM 88) (Methanosarcina frisia).